Consider the following 345-residue polypeptide: Dihydroorotate dehydrogenase (quinone) (345 aa).

Residues 65–69 and Thr-89 each bind FMN; that span reads AGLDK. Lys-69 is a binding site for substrate. Residue 114–118 coordinates substrate; sequence NRMGF. Residues Asn-142 and Asn-175 each coordinate FMN. Asn-175 serves as a coordination point for substrate. Catalysis depends on Ser-178, which acts as the Nucleophile. Asn-180 is a substrate binding site. Positions 220 and 248 each coordinate FMN. 249–250 lines the substrate pocket; the sequence is NT. FMN contacts are provided by residues Gly-271, Gly-300, and 321 to 322; that span reads YT.

Belongs to the dihydroorotate dehydrogenase family. Type 2 subfamily. As to quaternary structure, monomer. The cofactor is FMN.

It localises to the cell membrane. The catalysed reaction is (S)-dihydroorotate + a quinone = orotate + a quinol. The protein operates within pyrimidine metabolism; UMP biosynthesis via de novo pathway; orotate from (S)-dihydroorotate (quinone route): step 1/1. Catalyzes the conversion of dihydroorotate to orotate with quinone as electron acceptor. The protein is Dihydroorotate dehydrogenase (quinone) of Burkholderia thailandensis (strain ATCC 700388 / DSM 13276 / CCUG 48851 / CIP 106301 / E264).